The following is a 303-amino-acid chain: uncharacterized protein (303 aa).

Transmembrane regions (helical) follow at residues 12–32 (GLPI…SGIL), 81–101 (ISSV…VLEF), 117–137 (ALAG…FDVI), 174–194 (CIAM…TCMS), 208–228 (IISG…LDVV), and 265–286 (FFKG…SWAA). 3 Solcar repeats span residues 17 to 105 (SPMY…FKSK), 111 to 195 (DRPL…CMSF), and 206 to 293 (SHII…GKEI).

The protein belongs to the mitochondrial carrier (TC 2.A.29) family.

The protein resides in the mitochondrion inner membrane. This is an uncharacterized protein from Schizosaccharomyces pombe (strain 972 / ATCC 24843) (Fission yeast).